Here is a 614-residue protein sequence, read N- to C-terminus: MTKDIEYLTADYDNEKSSIQSVIDAIEGQDFLDVDTTMDDAVSDVSSLDEDGAISLTSSVVGPQGSKLMGYYQNELYDYASQLDSKMKEIIDTPFIEDIDKAFKGITNVKLENILIKNGGGHGRDTYGASGKIAKGDAKKSDSDVYSIDEILKSDQEFVKVIDQHYKEMKKEDKKLSKSDFEKMMTQGASCDYMTVAEAEELEEQKKKEEAIEIAALAGMVVLSCINPVAGAVAIGAYSAYSAANAATGKNIVTGRKLSKEERIMEGLSLIPLPGMGFLKGAGKSLMKLGFKGGEKFAVKTGLQKTMQQAVSRISPKMGMMKNSVLNQSRNFAQNTHVGQMLSNMRGQATHTVQQSRNWIGQQAQNVKRIVNNGLDKEIAHPFKQQLAPAGMGGIKFAETTTLRNMGQNIKRAVTPQNHVTHGPKDSMVRSEGKHSISSHEMNSSKYVESPNYTKVEFGEHYARLRPKKLKANIEYTTPTGHIYRTDHKGRIKEVYVDNLSLKDGDRNSHAQRTVGGEDRLPDDDGGHLIARMFGGSKDIDNLVAQSKFINRPFKEKGHWYNLEKEWQEFLNSGKEVKNIKMEVKYSGNSQRPTIFKVEYEINGERNIRRILNK.

The tract at residues 417-445 is disordered; sequence QNHVTHGPKDSMVRSEGKHSISSHEMNSS. Residues 423 to 435 are compositionally biased toward basic and acidic residues; sequence GPKDSMVRSEGKH.

This sequence belongs to the EssD family. Interacts (via C-terminal) with EssG; this interaction blocks EssD activity. Interacts with EssE.

It localises to the secreted. Its subcellular location is the cell membrane. In terms of biological role, component of the type VII secretion system (Ess). Plays a role in Ess secretion during infection. Required for the efficient secretion of EsxA. Required for abscess formation and staphylococcal persistence in host tissues. Possesses a toxic DNase activity that is modulated by EsaG by forming a nuclease toxin-antitoxin pair. This nuclease toxin targets competitor bacteria. The sequence is that of Type VII secretion system protein EssD from Staphylococcus aureus (strain USA300).